Consider the following 475-residue polypeptide: Dihydrolipoyl dehydrogenase (475 aa).

FAD is bound by residues 37–46 (EQYYSLGGVC), K55, and A118. A disulfide bridge links C46 with C51. NAD(+) is bound by residues 183-187 (GGGII), D206, V239, and 272-275 (AIGR). Residues D315 and A323 each contribute to the FAD site. H447 acts as the Proton acceptor in catalysis.

This sequence belongs to the class-I pyridine nucleotide-disulfide oxidoreductase family. In terms of assembly, homodimer. FAD is required as a cofactor.

The protein localises to the cytoplasm. The enzyme catalyses N(6)-[(R)-dihydrolipoyl]-L-lysyl-[protein] + NAD(+) = N(6)-[(R)-lipoyl]-L-lysyl-[protein] + NADH + H(+). Lipoamide dehydrogenase is a component of the alpha-ketoacid dehydrogenase complexes. This chain is Dihydrolipoyl dehydrogenase (lpdA), found in Buchnera aphidicola subsp. Baizongia pistaciae (strain Bp).